The following is a 150-amino-acid chain: S-protein homolog 3 (150 aa).

The N-terminal stretch at 1-23 (MKNILKTQVHVVVIYLLIKIAFS) is a signal peptide. Residues N32 and N70 are each glycosylated (N-linked (GlcNAc...) asparagine).

Belongs to the plant self-incompatibility (S1) protein family.

The protein resides in the secreted. This Arabidopsis thaliana (Mouse-ear cress) protein is S-protein homolog 3.